Here is a 154-residue protein sequence, read N- to C-terminus: Nuclear cap-binding protein subunit 2 (154 aa).

Residues Tyr-10, Tyr-33, 102-106 (RVDWD), 113-117 (RQYGR), and 123-124 (QV) contribute to the mRNA site. An RRM domain is found at 30–108 (CTLYVGNLSF…RLIRVDWDAG (79 aa)).

Belongs to the RRM NCBP2 family. In terms of assembly, component of the nuclear cap-binding complex (CBC), a heterodimer composed of Cbp80 and Cbp20 that interacts with m7GpppG-capped RNA. Interacts with Ars2.

Its subcellular location is the nucleus. In terms of biological role, component of the cap-binding complex (CBC), which binds co-transcriptionally to the 5' cap of pre-mRNAs and is involved in various processes such as pre-mRNA splicing and RNA-mediated gene silencing (RNAi). The CBC complex is involved in miRNA-mediated RNA interference via its interaction with Ars2 and is required for primary microRNAs (miRNAs) processing. Also involved in innate immunity via the short interfering RNAs (siRNAs) processing machinery by restricting the viral RNA production. In the CBC complex, Cbp20 recognizes and binds capped RNAs (m7GpppG-capped RNA) but requires Cbp80 to stabilize the movement of its N-terminal loop and lock the CBC into a high affinity cap-binding state with the cap structure. The polypeptide is Nuclear cap-binding protein subunit 2 (Cbp20) (Drosophila melanogaster (Fruit fly)).